Reading from the N-terminus, the 312-residue chain is Ribonuclease Z (312 aa).

Residues histidine 62, histidine 64, aspartate 66, histidine 67, histidine 139, aspartate 210, and histidine 268 each coordinate Zn(2+). Aspartate 66 (proton acceptor) is an active-site residue.

The protein belongs to the RNase Z family. As to quaternary structure, homodimer. Requires Zn(2+) as cofactor.

It carries out the reaction Endonucleolytic cleavage of RNA, removing extra 3' nucleotides from tRNA precursor, generating 3' termini of tRNAs. A 3'-hydroxy group is left at the tRNA terminus and a 5'-phosphoryl group is left at the trailer molecule.. In terms of biological role, zinc phosphodiesterase, which displays some tRNA 3'-processing endonuclease activity. Probably involved in tRNA maturation, by removing a 3'-trailer from precursor tRNA. This Crocosphaera subtropica (strain ATCC 51142 / BH68) (Cyanothece sp. (strain ATCC 51142)) protein is Ribonuclease Z.